A 676-amino-acid chain; its full sequence is Multisubstrate pseudouridine synthase 7 (676 aa).

2 disordered regions span residues 1–27 (MSDS…AKKL) and 87–110 (KMPK…AARR). Ser-2 bears the N-acetylserine mark. Over residues 94 to 110 (RSKEEVNAEKESEAARR) the composition is skewed to basic and acidic residues. Asp-256 serves as the catalytic Nucleophile. The TRUD domain occupies 338 to 582 (GFINYFGMQR…AGSYRTVIQK (245 aa)).

The protein belongs to the pseudouridine synthase TruD family.

Its subcellular location is the nucleus. It is found in the cytoplasm. The enzyme catalyses uridine in 5S rRNA = pseudouridine in 5S rRNA. The catalysed reaction is uridine in snRNA = pseudouridine in snRNA. It carries out the reaction uridine(13) in tRNA = pseudouridine(13) in tRNA. It catalyses the reaction a uridine in mRNA = a pseudouridine in mRNA. In terms of biological role, catalyzes pseudouridylation at position 35 in U2 snRNA stem-loop II region which induces particular conformation of the mRNA-U2 snRNA duplex and places the nucleophile in an accessible position for the first step of splicing. Also catalyzes pseudouridylation at position 56 in U2 snRNA. Also catalyzes pseudouridylation at position 50 in 5S rRNA, position 13 in cytoplasmic tRNAs, and position 35 in pre-tRNA(Tyr). Pseudouridine residues in tRNAs may stabilize the local RNA conformation, favor interactions with protein partners and play an important role in the stabilization of the codon-anticodon interaction with mRNA. Also catalyzes pseudouridylation of mRNAs in response to heat shock: mediates pseudouridylation of mRNAs with the consensus sequence 5'-UGUAR-3'. This Saccharomyces cerevisiae (strain ATCC 204508 / S288c) (Baker's yeast) protein is Multisubstrate pseudouridine synthase 7.